Reading from the N-terminus, the 208-residue chain is Probable DNA-3-methyladenine glycosylase (208 aa).

Belongs to the DNA glycosylase MPG family.

It is found in the nucleus. The catalysed reaction is Hydrolysis of alkylated DNA, releasing 3-methyladenine, 3-methylguanine, 7-methylguanine and 7-methyladenine.. Functionally, hydrolysis of the deoxyribose N-glycosidic bond to excise 3-methyladenine, and 7-methylguanine from the damaged DNA polymer formed by alkylation lesions. The polypeptide is Probable DNA-3-methyladenine glycosylase (Encephalitozoon cuniculi (strain GB-M1) (Microsporidian parasite)).